We begin with the raw amino-acid sequence, 373 residues long: MTGWSCLVTGAGGFLGQRIVRLLVEEKELKEIRVLDKAFRPELREEFSKLQNKTKLTVLEGDILDEPFLKRACQDVSVVIHTACIIDVFGVTHRESIMNVNVKGTQLLLEACVQASVPVFIYTSTLEVAGPNSYKEIIQNGHEEEPLENTWPAPYPYSKKLAEKAVLAANGWTLKNGGTLYTCALRPMYIYGEGGPFLSASINEALNNNGILSSVGKFSTVNPVYVGNVAWAHILALRALRDPKKAPSVQGQFYYISDDTPHQSYDNLNYILSKEFGLCLDSRWSLPLALMYWIGFLLEVVSFLLSPVYSYQPPFNRHTVTLSNSVFTFSYKKAQRDLAYKPLYSWEEAKQKTVEWVGSLVDRHKETLKSKTQ.

Residues 10-15, tyrosine 155, and lysine 159 each bind NADP(+); that span reads GAGGFL. Lysine 159 acts as the Proton donor in catalysis. A helical membrane pass occupies residues 288 to 308; sequence LALMYWIGFLLEVVSFLLSPV.

Belongs to the 3-beta-HSD family. As to expression, adrenal glands, testes and ovaries.

The protein localises to the endoplasmic reticulum membrane. It is found in the mitochondrion membrane. The catalysed reaction is a 3beta-hydroxy-Delta(5)-steroid + NAD(+) = a 3-oxo-Delta(5)-steroid + NADH + H(+). The enzyme catalyses pregnenolone + NAD(+) = pregn-5-ene-3,20-dione + NADH + H(+). It carries out the reaction 3beta-hydroxyandrost-5-en-17-one + NAD(+) = androst-5-ene-3,17-dione + NADH + H(+). It catalyses the reaction androst-5-en-3beta,17beta-diol + NAD(+) = 17beta-hydroxy-androst-5-en-3-one + NADH + H(+). The catalysed reaction is a 3beta-hydroxysteroid + NADP(+) = a 3-oxosteroid + NADPH + H(+). The enzyme catalyses 5alpha-androstane-3beta,17beta-diol + NADP(+) = 17beta-hydroxy-5alpha-androstan-3-one + NADPH + H(+). It carries out the reaction 3beta-hydroxy-5alpha-androstan-17-one + NADP(+) = 5alpha-androstan-3,17-dione + NADPH + H(+). It catalyses the reaction a 3-oxo-Delta(5)-steroid = a 3-oxo-Delta(4)-steroid. The catalysed reaction is pregn-5-ene-3,20-dione = progesterone. The enzyme catalyses androst-5-ene-3,17-dione = androst-4-ene-3,17-dione. It carries out the reaction 17beta-hydroxy-androst-5-en-3-one = testosterone. It catalyses the reaction 5alpha-androstane-3beta,17beta-diol + NAD(+) = 17beta-hydroxy-5alpha-androstan-3-one + NADH + H(+). It functions in the pathway steroid hormone biosynthesis. It participates in steroid metabolism. A bifunctional enzyme responsible for the oxidation and isomerization of 3beta-hydroxy-Delta(5)-steroid precursors to 3-oxo-Delta(4)-steroids, an essential step in steroid hormone biosynthesis. Specifically catalyzes the conversion of pregnenolone to progesterone, 17alpha-hydroxypregnenolone to 17alpha-hydroxyprogesterone, dehydroepiandrosterone (DHEA) to 4-androstenedione and androstenediol to testosterone. Additionally, catalyzes the interconversion between 3beta-hydroxy and 3-oxo-5alpha-androstane steroids controlling the bioavalability of the active forms. Specifically converts dihydrotestosterone to its inactive form 5alpha-androstanediol, that does not bind androgen receptor/AR. Also converts androstanedione, a precursor of testosterone and estrone, to epiandrosterone. Expected to use NAD(+) as preferred electron donor for the 3beta-hydroxy-steroid dehydrogenase activity and NADPH for the 3-ketosteroid reductase activity. The chain is 3 beta-hydroxysteroid dehydrogenase/Delta 5--&gt;4-isomerase type 1 (HSD3B1) from Macaca mulatta (Rhesus macaque).